A 156-amino-acid polypeptide reads, in one-letter code: Small ribosomal subunit protein uS7c (156 aa).

It belongs to the universal ribosomal protein uS7 family. Part of the 30S ribosomal subunit.

It localises to the plastid. It is found in the chloroplast. Functionally, one of the primary rRNA binding proteins, it binds directly to 16S rRNA where it nucleates assembly of the head domain of the 30S subunit. The protein is Small ribosomal subunit protein uS7c (rps7) of Chlorella vulgaris (Green alga).